A 786-amino-acid polypeptide reads, in one-letter code: MKGTGIMDCAPKALLARALYDNCPDCSDELAFSRGDILTILEQHVPESEGWWKCLLHGRQGLAPANRLQILTEVAADRPCPPFLRGLEEAPASSEETYQVPTLPRPPTPGPVYEQMRSWAEGPQPPTAQVYEFPDPPTSARIICEKTLSFPKQAILTLPRPVRASLPTLPSQVYDVPTQHRGPVVLKEPEKQQLYDIPASPKKAGLHPPDSQASGQGVPLISVTTLRRGGYSTLPNPQKSEWIYDTPVSPGKASVRNTPLTSFAEESRPHALPSSSSTFYNPPSGRSRSLTPQLNNNVPMQKKLSLPEIPSYGFLVPRGTFPLDEDVSYKVPSSFLIPRVEQQNTKPNIYDIPKATSSVSQAGKELEKAKEVSENSAGHNSSWFSRRTTSPSPEPDRLSGSSSDSRASIVSSCSTTSTDDSSSSSSEESAKELSLDLDVAKETVMALQHKVVSSVAGLMLFVSRKWRFRDYLEANIDAIHRSTDHIEESVREFLDFARGVHGTACNLTDSNLQNRIRDQMQTISNSYRILLETKESLDNRNWPLEVLVTDSVQNSPDDLERFVMVARMLPEDIKRFASIVIANGRLLFKRNCEKEETVQLTPNAEFKCEKYIQPPQRETESHQKSTPSTKQREDEHSSELLKKNRANICGQNPGPLIPQPSSQQTPERKPRLSEHCRLYFGALFKAISAFHGSLSSSQPAEIITQSKLVIMVGQKLVDTLCMETQERDVRNEILRGSSHLCSLLKDVALATKNAVLTYPSPAALGHLQAEAEKLEQHTRQFRGTLG.

The SH3 domain occupies 11 to 73 (PKALLARALY…PANRLQILTE (63 aa)). 2 positions are modified to phosphoserine: S200 and S249. The tract at residues 262-295 (SFAEESRPHALPSSSSTFYNPPSGRSRSLTPQLN) is disordered. Residues 273–295 (PSSSSTFYNPPSGRSRSLTPQLN) are compositionally biased toward polar residues. S305 is subject to Phosphoserine. Disordered regions lie at residues 361–429 (QAGK…SEES) and 612–670 (IQPP…ERKP). Residues 364–373 (KELEKAKEVS) are compositionally biased toward basic and acidic residues. Over residues 374–391 (ENSAGHNSSWFSRRTTSP) the composition is skewed to polar residues. 2 positions are modified to phosphoserine: S376 and S390. The span at 399–427 (SGSSSDSRASIVSSCSTTSTDDSSSSSSE) shows a compositional bias: low complexity. A compositionally biased stretch (basic and acidic residues) spans 630–642 (KQREDEHSSELLK).

Belongs to the CAS family. Interacts (via SH3 domain) with PTK2/FAK1 (via C-terminus). Phosphorylated on tyrosines by SRC. As to expression, expressed abundantly in lung and spleen. Also highly expressed in ovarian and leukemia cell lines.

It localises to the cytoplasm. The protein localises to the cytoskeleton. It is found in the cell junction. Its subcellular location is the focal adhesion. Its function is as follows. Docking protein that plays a role in tyrosine kinase-based signaling related to cell adhesion and cell spreading. Regulates PTK2/FAK1 activity, focal adhesion integrity, and cell spreading. The chain is Cas scaffolding protein family member 4 (CASS4) from Homo sapiens (Human).